A 183-amino-acid polypeptide reads, in one-letter code: Phosphinothricin N-acetyltransferase (183 aa).

In terms of domain architecture, N-acetyltransferase spans 8–169 (VEIRPATAAD…DVGFWQRDFE (162 aa)). Acetyl-CoA contacts are provided by residues 91–93 (VYV), 99–104 (RLGLGS), and Asn-130.

It belongs to the acetyltransferase family. PAT/BAR subfamily.

It catalyses the reaction phosphinothricin + acetyl-CoA = N-acetylphosphinothricin + CoA + H(+). Its function is as follows. Inactivates phosphinothricin (PPT) by transfer of an acetyl group from acetyl CoA. This enzyme is an effector of phosphinothricin tripeptide (PTT or bialaphos) resistance. This is Phosphinothricin N-acetyltransferase from Streptomyces viridochromogenes (strain DSM 40736 / JCM 4977 / BCRC 1201 / Tue 494).